The primary structure comprises 444 residues: Phosphatidate cytidylyltransferase 2 (444 aa).

The span at 1 to 38 shows a compositional bias: basic and acidic residues; the sequence is MTELRQRVVREDAPPEDKESESEAKLDGETASDSESRA. A disordered region spans residues 1–48; that stretch reads MTELRQRVVREDAPPEDKESESEAKLDGETASDSESRAETAPLPTSVD. Residue Ser-20 is modified to Phosphoserine. Thr-30 is subject to Phosphothreonine. Phosphoserine is present on residues Ser-32, Ser-34, and Ser-36. Residue Thr-50 is modified to Phosphothreonine. The next 6 membrane-spanning stretches (helical) occupy residues 78-98, 129-149, 165-185, 212-232, 261-281, and 339-359; these read MIAF…MIVM, WYFL…DYFF, HRFI…LSLV, LVIH…SCVI, GFIG…YVMS, and IALS…ASGF.

It belongs to the CDS family. In terms of assembly, homodimer. Ubiquitous. Expressed in the ganglion cell layer and inner nuclear layer of the retina.

It is found in the endoplasmic reticulum membrane. The enzyme catalyses a 1,2-diacyl-sn-glycero-3-phosphate + CTP + H(+) = a CDP-1,2-diacyl-sn-glycerol + diphosphate. It carries out the reaction 1-octadecanoyl-2-(5Z,8Z,11Z,14Z-eicosatetraenoyl)-sn-glycero-3-phosphate + CTP + H(+) = 1-octadecanoyl-2-(5Z,8Z,11Z,14Z-eicosatetraenoyl)-sn-glycero-3-cytidine-5'-diphosphate + diphosphate. It catalyses the reaction 1-octadecanoyl-2-(9Z,12Z-octadecadienoyl)-sn-glycero-3-phosphate + CTP + H(+) = 1-octadecanoyl-2-(9Z,12Z-octadecadienoyl)-sn-glycero-3-cytidine-5'-diphosphate + diphosphate. The catalysed reaction is 1-hexadecanoyl-2-(5Z,8Z,11Z,14Z-eicosatetraenoyl)-sn-glycero-3-phosphate + CTP + H(+) = 1-hexadecanoyl-2-(5Z,8Z,11Z,14Z-eicosatetraenoyl)-sn-glycero-3-cytidine-5'-diphosphate + diphosphate. The enzyme catalyses 1,2-di-(5Z,8Z,11Z,14Z)-eicosatetraenoyl-sn-glycero-3-phosphate + CTP + H(+) = 1,2-di-(5Z,8Z,11Z,14Z-eicosatetraenoyl)-sn-glycero-3-cytidine-5'-diphosphate + diphosphate. It carries out the reaction 1-octadecanoyl-2-(9Z-octadecenoyl)-sn-glycero-3-phosphate + CTP + H(+) = 1-octadecanoyl-2-(9Z-octadecenoyl)-sn-glycero-3-cytidine-5'-diphosphate + diphosphate. It catalyses the reaction 1-octadecanoyl-2-(4Z,7Z,10Z,13Z,16Z,19Z-docosahexaenoyl)-sn-glycero-3-phosphate + CTP + H(+) = 1-octadecanoyl-2-(4Z,7Z,10Z,13Z,16Z,19Z-docosahexaenoyl)-sn-glycero-3-cytidine-5'-diphosphate + diphosphate. The catalysed reaction is 1,2-di-(9Z,12Z-octadecadienoyl)-sn-glycero-3-phosphate + CTP + H(+) = 1,2-di-(9Z,12Z-octadecadienoyl)-sn-glycero-3-cytidine-5'-diphosphate + diphosphate. The enzyme catalyses 1,2-di-(9Z-octadecenoyl)-sn-glycero-3-phosphate + CTP + H(+) = 1,2-di-(9Z-octadecenoyl)-sn-glycero-3-cytidine-5'-diphosphate + diphosphate. Its pathway is phospholipid metabolism; CDP-diacylglycerol biosynthesis; CDP-diacylglycerol from sn-glycerol 3-phosphate: step 3/3. Catalyzes the conversion of phosphatidic acid (PA) to CDP-diacylglycerol (CDP-DAG), an essential intermediate in the synthesis of phosphatidylglycerol, cardiolipin and phosphatidylinositol. Exhibits specificity for the nature of the acyl chains at the sn-1 and sn-2 positions in the substrate, PA and the preferred acyl chain composition is 1-stearoyl-2-arachidonoyl-sn-phosphatidic acid. Plays an important role in regulating the growth and maturation of lipid droplets which are storage organelles at the center of lipid and energy homeostasis. In Mus musculus (Mouse), this protein is Phosphatidate cytidylyltransferase 2.